A 204-amino-acid polypeptide reads, in one-letter code: Methyl-CpG-binding domain protein 3-like 2B (204 aa).

Residues 126-137 (SLDRAGAERVRS) show a composition bias toward basic and acidic residues. The tract at residues 126 to 145 (SLDRAGAERVRSPLEPTPGR) is disordered.

Belongs to the MBD3L family.

The sequence is that of Methyl-CpG-binding domain protein 3-like 2B from Homo sapiens (Human).